Reading from the N-terminus, the 218-residue chain is uncharacterized protein (218 aa).

This is an uncharacterized protein from Acholeplasma phage L2 (Bacteriophage L2).